A 585-amino-acid polypeptide reads, in one-letter code: ATP-dependent lipid A-core flippase (585 aa).

The next 5 membrane-spanning stretches (helical) occupy residues 24-44 (LWKV…ASAA), 65-85 (LLVP…SFCG), 143-163 (ITVV…MIYV), 165-185 (WKLT…IGYV), and 253-273 (PIIQ…ALSP). Positions 29–310 (ALAVLGNVIY…LTEVNAVIQR (282 aa)) constitute an ABC transmembrane type-1 domain. The ABC transporter domain maps to 342-578 (LEFKSLGFAY…DGAYAALHKL (237 aa)). Position 376–383 (376–383 (GRSGSGKS)) interacts with ATP.

The protein belongs to the ABC transporter superfamily. Lipid exporter (TC 3.A.1.106) family. In terms of assembly, homodimer.

The protein resides in the cell inner membrane. It catalyses the reaction ATP + H2O + lipid A-core oligosaccharideSide 1 = ADP + phosphate + lipid A-core oligosaccharideSide 2.. Its function is as follows. Involved in lipopolysaccharide (LPS) biosynthesis. Translocates lipid A-core from the inner to the outer leaflet of the inner membrane. Transmembrane domains (TMD) form a pore in the inner membrane and the ATP-binding domain (NBD) is responsible for energy generation. The polypeptide is ATP-dependent lipid A-core flippase (Hahella chejuensis (strain KCTC 2396)).